The chain runs to 203 residues: NADH-ubiquinone oxidoreductase chain 6 (203 aa).

5 helical membrane-spanning segments follow: residues 16-36 (SNIL…TIVS), 40-60 (VVSV…LIMI), 70-90 (LLVY…LINI), 102-122 (YIPL…QKII), and 179-199 (WLII…VISI).

Belongs to the complex I subunit 6 family.

It localises to the mitochondrion membrane. The enzyme catalyses a ubiquinone + NADH + 5 H(+)(in) = a ubiquinol + NAD(+) + 4 H(+)(out). In terms of biological role, core subunit of the mitochondrial membrane respiratory chain NADH dehydrogenase (Complex I) that is believed to belong to the minimal assembly required for catalysis. Complex I functions in the transfer of electrons from NADH to the respiratory chain. The immediate electron acceptor for the enzyme is believed to be ubiquinone. This is NADH-ubiquinone oxidoreductase chain 6 (ND6) from Trichophyton rubrum (Athlete's foot fungus).